Consider the following 302-residue polypeptide: Quinolinate synthase (302 aa).

His24 and Ser41 together coordinate iminosuccinate. Position 86 (Cys86) interacts with [4Fe-4S] cluster. Iminosuccinate-binding positions include 112–114 (YVN) and Ser129. Residue Cys173 participates in [4Fe-4S] cluster binding. Iminosuccinate-binding positions include 199–201 (HPE) and Thr216. Residue Cys259 coordinates [4Fe-4S] cluster.

This sequence belongs to the quinolinate synthase family. Type 2 subfamily. The cofactor is [4Fe-4S] cluster.

It is found in the cytoplasm. It catalyses the reaction iminosuccinate + dihydroxyacetone phosphate = quinolinate + phosphate + 2 H2O + H(+). The protein operates within cofactor biosynthesis; NAD(+) biosynthesis; quinolinate from iminoaspartate: step 1/1. Catalyzes the condensation of iminoaspartate with dihydroxyacetone phosphate to form quinolinate. This is Quinolinate synthase from Thermococcus onnurineus (strain NA1).